Here is a 164-residue protein sequence, read N- to C-terminus: NADH-quinone oxidoreductase subunit J (164 aa).

Helical transmembrane passes span 1 to 21, 30 to 50, 54 to 74, 94 to 114, and 138 to 158; these read MEFFFYSSSLATIVFTVCSIF, LYLILSFVFTSCVFFSLGATF, LEVIIYAGAIMVLFVFFIMMF, YINFLFLLCILIFPFFFILSY, and YILVIELSSIVLLSALIIVSH.

The protein belongs to the complex I subunit 6 family. In terms of assembly, composed of 13 different subunits. Subunits NuoA, H, J, K, L, M, N constitute the membrane sector of the complex.

It localises to the cell membrane. It catalyses the reaction a quinone + NADH + 5 H(+)(in) = a quinol + NAD(+) + 4 H(+)(out). NDH-1 shuttles electrons from NADH, via FMN and iron-sulfur (Fe-S) centers, to quinones in the respiratory chain. Couples the redox reaction to proton translocation (for every two electrons transferred, four hydrogen ions are translocated across the cytoplasmic membrane), and thus conserves the redox energy in a proton gradient. The protein is NADH-quinone oxidoreductase subunit J (nuoJ) of Buchnera aphidicola subsp. Baizongia pistaciae (strain Bp).